We begin with the raw amino-acid sequence, 343 residues long: MRN complex-interacting protein (343 aa).

A disordered region spans residues 75–104 (EETVSASEEENVGHQQAGNVKQQEKSQPSE). A compositionally biased stretch (polar residues) spans 87–104 (GHQQAGNVKQQEKSQPSE). S100 and S115 each carry phosphoserine. 3 disordered regions span residues 128-178 (SKQP…WGPQ), 193-212 (SPCL…RGPG), and 230-324 (AQFV…AQNP). The Nuclear localization signal (NLS) motif lies at 148-151 (RKRK). Residues 193–202 (SPCLQENSAD) show a composition bias toward polar residues. The necessary for the association with the MRN complex stretch occupies residues 213 to 237 (KELWSPIQQVTATSSKWAQFVLPPR). Over residues 240–255 (SHVDSEQPRSLQRDPR) the composition is skewed to basic and acidic residues.

Belongs to the MRNIP family. In terms of assembly, associates with the MRE11-RAD50-NBN (MRN) damage-sensing complex; this association is constitutive. Interacts with MRE11. Interacts with NBN. Interacts with RAD50. Phosphorylated; phosphorylation is constitutive and occurs in the absence of any DNA-damaging stimulus. Phosphorylation on Ser-115 is necessary for its nuclear retention.

Its subcellular location is the nucleus. The protein resides in the nucleoplasm. Plays a role in the cellular response to DNA damage and the maintenance of genome stability through its association with the MRN damage-sensing complex. Promotes chromatin loading and activity of the MRN complex to facilitate subsequent ATM-mediated DNA damage response signaling and DNA repair. This Homo sapiens (Human) protein is MRN complex-interacting protein.